The sequence spans 319 residues: tRNA-modifying protein YgfZ (319 aa).

Residues Trp27 and Trp189 each coordinate folate.

It belongs to the tRNA-modifying YgfZ family.

The protein localises to the cytoplasm. Folate-binding protein involved in regulating the level of ATP-DnaA and in the modification of some tRNAs. It is probably a key factor in regulatory networks that act via tRNA modification, such as initiation of chromosomal replication. This is tRNA-modifying protein YgfZ from Buchnera aphidicola subsp. Acyrthosiphon pisum (strain APS) (Acyrthosiphon pisum symbiotic bacterium).